A 1680-amino-acid polypeptide reads, in one-letter code: Sodium channel protein type 7 subunit alpha (1680 aa).

At 1–117 (MLTSPEPKGL…RRAVIKVLVH (117 aa)) the chain is on the cytoplasmic side. An I repeat occupies 100-401 (TLSPLSSLRR…ILTMAYEQEK (302 aa)). A helical transmembrane segment spans residues 118–137 (PLFRLLILISVLTDSILMCM). The Extracellular segment spans residues 138–141 (SNLP). Residues 142 to 167 (EWILAVENTLLGIYTFEILVKVIARG) traverse the membrane as a helical segment. Topologically, residues 168–178 (IWAGSFSFLGD) are cytoplasmic. A helical transmembrane segment spans residues 179–196 (LWNWLDFSVTLFELITRS). Over 197-200 (SPLS) the chain is Extracellular. The helical transmembrane segment at 201–219 (SLPMFKTIRTLRILKIIPL) threads the bilayer. Over 220–237 (NHGLQSIVVTLVQCLKKL) the chain is Cytoplasmic. Residues 238–259 (LGAIALALFFLTVSSLFGMGLF) form a helical membrane-spanning segment. Over 260-338 (MGNLKHKCVR…PDNGFTSFDN (79 aa)) the chain is Extracellular. A disulfide bond links Cys267 and Cys307. N-linked (GlcNAc...) asparagine glycosylation is found at Asn281 and Asn309. The segment at residues 339–366 (FGWALLAMFRLMTQDYPELLYHQILYAS) is an intramembrane region (pore-forming). Gly367 is a topological domain (extracellular). A helical membrane pass occupies residues 368-407 (KIYMIFFVLISFWFAFYMASLFLGILTMAYEQEKQRASEE). Over 408–505 (SRDMDSKCHQ…EFADRIITHP (98 aa)) the chain is Cytoplasmic. An II repeat occupies 487–756 (CSPCWIKLNE…QLAVAWIKMV (270 aa)). The chain crosses the membrane as a helical span at residues 506 to 521 (LFDLFLVICIILNICF). The Extracellular segment spans residues 522–530 (LALEHFPMS). A helical transmembrane segment spans residues 531–559 (EELMSLLAIGNLVFIGIYTIEMILKIIAM). The Cytoplasmic segment spans residues 560–568 (HPYGYFQIS). The chain crosses the membrane as a helical span at residues 569–586 (WHIFDSILVVLGLTEMLL). The Extracellular portion of the chain corresponds to 587–592 (ADIEEI). A helical membrane pass occupies residues 593-608 (TVFILVPLIFIKLGKY). The Cytoplasmic segment spans residues 609–625 (APPFKNLMRILGRALVA). The helical transmembrane segment at 626-654 (LKDLVLLVSIFIYFSAVFGMKLFGRSYKD) threads the bilayer. At 655-672 (CVCHVDQDCQRQRWHMSD) the chain is on the extracellular side. 2 disulfides stabilise this stretch: Cys657-Cys663 and Cys695-Cys704. Positions 673–699 (FLHAYVTVFRILCGEWIETLWECMEVA) form an intramembrane region, pore-forming. Residue Gly700 is a topological domain, extracellular. A helical transmembrane segment spans residues 701 to 731 (EAWCIPFYMMVILIGNLLILYLFVALVSSFA). The Cytoplasmic portion of the chain corresponds to 732–933 (SYDATTEVSK…KTCCKIVENS (202 aa)). Residues 807–833 (DQSSGTEKTPVTESESQSLIASPSVSE) show a composition bias toward polar residues. The disordered stretch occupies residues 807–874 (DQSSGTEKTP…MKQSSSSECS (68 aa)). Ser842 carries the post-translational modification Phosphoserine. An III repeat occupies 915 to 1223 (NGKIWRNIRK…KKQYRALKKL (309 aa)). A helical transmembrane segment spans residues 934-952 (WFECFIGLVTLLCTGTLAL). At 953-960 (EDIYIDQR) the chain is on the extracellular side. The chain crosses the membrane as a helical span at residues 961-989 (KTIKIFLEYGDMIFAYIFILEMLLKWVAY). Residues 990-997 (GFKAYFSN) lie on the Cytoplasmic side of the membrane. The helical transmembrane segment at 998-1019 (NWYKLDFMVVIVLCLSLIGKTR) threads the bilayer. A topological domain (extracellular) is located at residue Glu1020. Residues 1021-1039 (DLNPLASIKFLRALRVLSQ) form a helical membrane-spanning segment. The Cytoplasmic segment spans residues 1040 to 1054 (FERMKVVLRALIKTT). A helical membrane pass occupies residues 1055–1079 (LPAVSVFLVCLMIWLLFSVMGVFLF). Residues 1080–1126 (AGKFYECIDPTRGERFSVFEVMNKSQCENLVFNESMPWENAKLNFDN) lie on the Extracellular side of the membrane. Cys1086 and Cys1106 are joined by a disulfide. N-linked (GlcNAc...) asparagine glycosylation is found at Asn1102 and Asn1112. Residues 1127–1153 (VGNGFLSLFQVATFNGWISIMNSAIDS) constitute an intramembrane region (pore-forming). The Extracellular segment spans residues 1154–1166 (VGVYMQPSFEHSL). Residues 1167-1201 (HMYTYFIIFVVFGLFLPLCMLIGVIIRNFNKQKIK) traverse the membrane as a helical segment. Topologically, residues 1202 to 1249 (QGGSNIFITVKQKKQYRALKKLLYADSQKPAARPRNKFQGFICDVVTH) are cytoplasmic. The IV repeat unit spans residues 1232–1530 (AARPRNKFQG…WNRFDPDRTQ (299 aa)). The helical transmembrane segment at 1250–1271 (RVFNVIIILLICFQATTIMIQN) threads the bilayer. Over 1272–1275 (DEQS) the chain is Extracellular. The helical transmembrane segment at 1276-1304 (PQIETAVFWMNSLFTMLFTLECILKLTAF) threads the bilayer. Topologically, residues 1305-1311 (RCHYFTS) are cytoplasmic. A helical membrane pass occupies residues 1312-1337 (AWNVHDFMVVVFSITGLLLPLSIGQY). At 1338-1340 (FVP) the chain is on the extracellular side. A helical membrane pass occupies residues 1341–1361 (PSLVQLLLLSRIIHVLRPGKG). Topologically, residues 1362-1376 (PKVFHDLMLPLMLSL) are cytoplasmic. The chain crosses the membrane as a helical span at residues 1377–1401 (PALLNIALLIFLVMFIYAIFGMYNF). The Extracellular portion of the chain corresponds to 1402-1419 (AYVKKEAGINDVSNFETF). The segment at residues 1420-1443 (GSSMLCLFQVTTFSGWDGMLDAIF) is an intramembrane region (pore-forming). Residues 1444–1467 (NSQWSDCDPDKINPGTQVRGDCGS) lie on the Extracellular side of the membrane. An intrachain disulfide couples Cys1450 to Cys1465. The chain crosses the membrane as a helical span at residues 1468 to 1503 (PSVGIFYFVSYILISWLIIVNMYVVLIMEFLSIPSK). Topologically, residues 1504-1680 (RKNRTLSEDD…EEKASIQTQI (177 aa)) are cytoplasmic. The segment at 1646 to 1680 (KIQDIPEIDDGREDPNSKGVHSGQIEEKASIQTQI) is disordered.

The protein belongs to the sodium channel (TC 1.A.1.10) family. SCN7A subfamily. As to quaternary structure, the sodium channel formed by SCN7A is probably a heterooligomeric complex consisting of the ion conducting pore forming alpha subunit SCN7A and regulatory beta subunits such as SCN3B. Interacts with ATP1A1; activates ATP1A1 and thereby indirectly signals to nearby neurons to regulate sodium homeostasis. In terms of tissue distribution, not tissue specific but widely expressed.

The protein resides in the cell membrane. The enzyme catalyses Na(+)(in) = Na(+)(out). Its function is as follows. Sodium leak channel functioning as an osmosensor regulating sodium ion levels in various tissues and organs. While most sodium channels are voltage-gated, SCN7A is not and lets sodium flow through membrane along its concentration gradient. In glial cells of the central nervous system, senses body-fluid sodium levels and controls salt intake behavior as well as voluntary water intake through activation of nearby neurons to maintain appropriate sodium levels in the body. By mediating sodium influx into keratinocytes, also plays a role in skin barrier homeostasis. This Rattus norvegicus (Rat) protein is Sodium channel protein type 7 subunit alpha.